The primary structure comprises 363 residues: G-protein coupled receptor 6 (363 aa).

Over 1 to 75 the chain is Extracellular; it reads MNASAAALNE…SGLLLSAVNP (75 aa). 2 N-linked (GlcNAc...) asparagine glycosylation sites follow: N2 and N9. A disordered region spans residues 28–51; sequence AGTPDTSEWGPPAASAALGGGGGP. N52 carries an N-linked (GlcNAc...) asparagine glycan. Residues 76–95 form a helical membrane-spanning segment; that stretch reads WDVLLCVSGTVIAGENALVV. The Cytoplasmic segment spans residues 96–107; that stretch reads ALIASTPALRTP. Residues 108–131 traverse the membrane as a helical segment; the sequence is MFVLVGSLATADLLAGCGLILHFV. Residues 132 to 143 are Extracellular-facing; that stretch reads FQYVVPSETVSL. The helical transmembrane segment at 144-165 threads the bilayer; the sequence is LMVGFLVASFAASVSSLLAITV. The Cytoplasmic segment spans residues 166–186; it reads DRYLSLYNALTYYSRRTLLGV. A helical transmembrane segment spans residues 187–206; it reads HLLLAATWTVSLGLGLLPVL. Residues 207-231 are Extracellular-facing; sequence GWNCLADRASCSVVRPLTRSHVALL. The helical transmembrane segment at 232-250 threads the bilayer; sequence STSFFVVFGIMLHLYVRIC. Residues 251 to 278 lie on the Cytoplasmic side of the membrane; the sequence is QVVWRHAHQIALQQHCLAPPHLAATRKG. The chain crosses the membrane as a helical span at residues 279–305; the sequence is VGTLAVVLGTFGASWLPFAIYCVVGSQ. Residues 306–310 are Extracellular-facing; that stretch reads EDPAI. Residues 311 to 332 form a helical membrane-spanning segment; sequence YTYATLLPATYNSMINPIIYAF. Residues 333-363 are Cytoplasmic-facing; it reads RNQEIQRALWLLFCGCFQSKVPFRSRSPSEV. Residue C346 is the site of S-palmitoyl cysteine attachment. 3 positions are modified to phosphoserine: S357, S359, and S361.

It belongs to the G-protein coupled receptor 1 family. Expressed in the brain, with a prominent distribution in striatum.

Its subcellular location is the cell membrane. Its function is as follows. Orphan receptor with constitutive G(s) signaling activity that activate cyclic AMP. Promotes neurite outgrowth and blocks myelin inhibition in neurons. The chain is G-protein coupled receptor 6 (Gpr6) from Rattus norvegicus (Rat).